We begin with the raw amino-acid sequence, 255 residues long: Putative cysteine-rich repeat secretory protein 32 (255 aa).

The N-terminal stretch at 1–28 is a signal peptide; the sequence is MYSSYSLFKCLVCFYILGIQVLIHSVSS. 2 Gnk2-homologous domains span residues 35 to 136 and 143 to 252; these read YLHH…TINS and YENT…LYPF.

The protein belongs to the cysteine-rich repeat secretory protein family.

Its subcellular location is the secreted. The protein is Putative cysteine-rich repeat secretory protein 32 (CRRSP32) of Arabidopsis thaliana (Mouse-ear cress).